We begin with the raw amino-acid sequence, 336 residues long: Putative bifunctional cytochrome c-type biogenesis protein CcmAE (336 aa).

Residues 1–199 (MLEARDLYCE…ADTVRRLALT (199 aa)) are cytochrome c biogenesis ATP-binding export protein CcmA 2. Positions 2 to 242 (LEARDLYCER…VGQRLRVGGM (241 aa)) constitute an ABC transporter domain. 34 to 41 (GGNGAGKT) lines the ATP pocket. Positions 196 to 336 (LALTTALVLY…PQRVDKDTSS (141 aa)) are cytochrome c-type biogenesis protein CcmE 2. Heme is bound by residues histidine 307 and tyrosine 311. A disordered region spans residues 307-336 (HDENYTPPEVEKAMQENHRRPQRVDKDTSS).

This sequence in the N-terminal section; belongs to the ABC transporter superfamily. CcmA exporter (TC 3.A.1.107) family. The protein in the C-terminal section; belongs to the CcmE/CycJ family.

It localises to the cell inner membrane. The catalysed reaction is heme b(in) + ATP + H2O = heme b(out) + ADP + phosphate + H(+). In terms of biological role, part of the ABC transporter complex CcmAB involved in the biogenesis of c-type cytochromes; once thought to export heme, this seems not to be the case, but its exact role is uncertain. Responsible for energy coupling to the transport system. Heme chaperone required for the biogenesis of c-type cytochromes. Transiently binds heme delivered by CcmC and transfers the heme to apo-cytochromes in a process facilitated by CcmF and CcmH. The sequence is that of Putative bifunctional cytochrome c-type biogenesis protein CcmAE (ccmAE) from Salmonella choleraesuis (strain SC-B67).